Consider the following 391-residue polypeptide: Transcription factor TCP3 (391 aa).

Positions 1 to 34 (MAPDNDHFLDSPSPPLLEMRHHQSATENGGGCGE) are disordered. A TCP domain is found at 49 to 107 (RKDRHSKVCTAKGPRDRRVRLSAPTAIQFYDVQDRLGFDRPSKAVDWLITKAKSAIDDL). 3 disordered regions span residues 122–168 (HAAA…PASM), 317–345 (HHHHHHHQQSMTTDDLHHHHPYHIPPGIH), and 363–391 (FRIPARFQGEQEEHGGDNKPSSASSDSRH). A compositionally biased stretch (polar residues) spans 381 to 391 (KPSSASSDSRH).

In terms of assembly, interacts with SPL. Interacts with KIN10; KIN11 and FLZ3. As to expression, expressed in cotyledons, particularly in the vascular region, in leaves, roots, buds, flowers and immature siliques.

It is found in the nucleus. Functionally, plays a pivotal role in the control of morphogenesis of shoot organs by negatively regulating the expression of boundary-specific genes such as CUC genes, probably through the induction of miRNA (e.g. miR164). Participates in ovule development. This chain is Transcription factor TCP3 (TCP3), found in Arabidopsis thaliana (Mouse-ear cress).